The sequence spans 474 residues: MTKKLHIKTWGCQMNEYDSSKMADLLASTHGYQLTEIPEEADLLLLNTCSIREKAQEKVFSLLGQWKLLKEKNPELIIGVGGCVASQEGEHLRQRAPCVDVIFGPQTLHRLPEMINHVQGTHSPVVDISFPEIEKFDRLPEPRAEGPTAFVSIMEGCNKYCTFCVVPYTRGEEVSRPSDDILFEIAQLAAQGVREVNLLGQNVNAYRGATYDGDICSFAELLRLVAAIDGIDRVRFTTSHPIEFTDDIIDVYRDTPELVSFLHLPVQSGSDRILTMMKRAHTALEYKAIIRKLRQARPDIQISSDFIIGFPGETQQDFEQTMKLVADVRFDTSYSFIYSPRPGTPAADLPDDVSEEEKKQRLHILQQRITQQAMEISREMVGTVQRILVEGTSRKNVMELAGRTENNRVVNFEGTPEMIGKFVDVEIVDVYASSLRGILLRTEDQMDLRIHESPQSVIARTRKENELGVGLYQP.

Residues 3-120 (KKLHIKTWGC…LPEMINHVQG (118 aa)) form the MTTase N-terminal domain. The [4Fe-4S] cluster site is built by Cys-12, Cys-49, Cys-83, Cys-157, Cys-161, and Cys-164. The Radical SAM core domain maps to 143–375 (RAEGPTAFVS…QQRITQQAME (233 aa)). The TRAM domain occupies 378 to 441 (REMVGTVQRI…ASSLRGILLR (64 aa)).

Belongs to the methylthiotransferase family. MiaB subfamily. Monomer. [4Fe-4S] cluster serves as cofactor.

The protein localises to the cytoplasm. The catalysed reaction is N(6)-dimethylallyladenosine(37) in tRNA + (sulfur carrier)-SH + AH2 + 2 S-adenosyl-L-methionine = 2-methylsulfanyl-N(6)-dimethylallyladenosine(37) in tRNA + (sulfur carrier)-H + 5'-deoxyadenosine + L-methionine + A + S-adenosyl-L-homocysteine + 2 H(+). Functionally, catalyzes the methylthiolation of N6-(dimethylallyl)adenosine (i(6)A), leading to the formation of 2-methylthio-N6-(dimethylallyl)adenosine (ms(2)i(6)A) at position 37 in tRNAs that read codons beginning with uridine. This is tRNA-2-methylthio-N(6)-dimethylallyladenosine synthase from Yersinia enterocolitica serotype O:8 / biotype 1B (strain NCTC 13174 / 8081).